The following is a 112-amino-acid chain: Putative membrane protein insertion efficiency factor (112 aa).

The protein belongs to the UPF0161 family.

It is found in the cell inner membrane. In terms of biological role, could be involved in insertion of integral membrane proteins into the membrane. The polypeptide is Putative membrane protein insertion efficiency factor (Bradyrhizobium diazoefficiens (strain JCM 10833 / BCRC 13528 / IAM 13628 / NBRC 14792 / USDA 110)).